The following is a 529-amino-acid chain: Bifunctional purine biosynthesis protein PurH (529 aa).

The region spanning 1–148 (MQQRRPVRRA…KNHKDVAIVV (148 aa)) is the MGS-like domain.

Belongs to the PurH family.

The enzyme catalyses (6R)-10-formyltetrahydrofolate + 5-amino-1-(5-phospho-beta-D-ribosyl)imidazole-4-carboxamide = 5-formamido-1-(5-phospho-D-ribosyl)imidazole-4-carboxamide + (6S)-5,6,7,8-tetrahydrofolate. It catalyses the reaction IMP + H2O = 5-formamido-1-(5-phospho-D-ribosyl)imidazole-4-carboxamide. It participates in purine metabolism; IMP biosynthesis via de novo pathway; 5-formamido-1-(5-phospho-D-ribosyl)imidazole-4-carboxamide from 5-amino-1-(5-phospho-D-ribosyl)imidazole-4-carboxamide (10-formyl THF route): step 1/1. It functions in the pathway purine metabolism; IMP biosynthesis via de novo pathway; IMP from 5-formamido-1-(5-phospho-D-ribosyl)imidazole-4-carboxamide: step 1/1. The protein is Bifunctional purine biosynthesis protein PurH of Citrobacter koseri (strain ATCC BAA-895 / CDC 4225-83 / SGSC4696).